Consider the following 672-residue polypeptide: Glycine--tRNA ligase beta subunit (672 aa).

It belongs to the class-II aminoacyl-tRNA synthetase family. As to quaternary structure, tetramer of two alpha and two beta subunits.

The protein resides in the cytoplasm. It carries out the reaction tRNA(Gly) + glycine + ATP = glycyl-tRNA(Gly) + AMP + diphosphate. The polypeptide is Glycine--tRNA ligase beta subunit (Thermotoga sp. (strain RQ2)).